Reading from the N-terminus, the 978-residue chain is Sensor histidine kinase TodS (978 aa).

Residues 32–103 enclose the PAS 1 domain; it reads CEEHARIIFD…TQKRLVETAS (72 aa). Residues 108-162 enclose the PAC 1 domain; the sequence is VRCDVEILGKSGGREVIAVDFSLLPICNEEGSIVYLLAEGRNITDKKKAEAMLAL. The 219-residue stretch at 187–405 folds into the Histidine kinase 1 domain; the sequence is KVSHELRTPL…LFQVKLPLNA (219 aa). The residue at position 190 (histidine 190) is a Phosphohistidine; by autocatalysis. One can recognise a Response regulatory domain in the interval 452-567; the sequence is RVLIVEDNPD…ELRARVSNLV (116 aa). Residue aspartate 500 is modified to 4-aspartylphosphate. The PAS 2 domain maps to 611-681; sequence SEARWKAVYE…QRLANLLQGG (71 aa). The 53-residue stretch at 685–737 folds into the PAC 2 domain; sequence YSVERSYLCKNGSTIWANASVSLMPQRVGESPVILQIIDDITEKKQAQENLNQ. One can recognise a Histidine kinase 2 domain in the interval 757-974; it reads YIAHEINQPL…CFLVSIPARQ (218 aa). A Phosphohistidine modification is found at histidine 760.

Homodimer. Binds as a dimer to a pseudopalindromic sequence. Autophosphorylated. Activation requires a sequential transfer of a phosphate group from a His in the primary transmitter domain, to an Asp in the receiver domain and to a His in the secondary transmitter domain.

Its subcellular location is the cytoplasm. The catalysed reaction is ATP + protein L-histidine = ADP + protein N-phospho-L-histidine.. Member of the two-component regulatory system TodS/TodT involved in the regulation of toluene degradation. Phosphorylates TodT via a four-step phosphorelay in response to toluene. The polypeptide is Sensor histidine kinase TodS (todS) (Pseudomonas putida (strain ATCC 700007 / DSM 6899 / JCM 31910 / BCRC 17059 / LMG 24140 / F1)).